A 215-amino-acid chain; its full sequence is MRRVVGKRVQEFSDAEFEQLRSQYDDVVLDVGTGDGKHPYKVARQNPSRLVVALDADKSRMEKISAKAAAKPAKGGLPNLLYLWATAERLPPLSGVGELHVLMPWGSLLRGVLGSSPEMLRGMAAVCRPGASFLVALNLHAWRPSVPEVGEHPEPTPDSADEWLAPRYAEAGWKLADCRYLEPEEVAGLETSWTRRLHSSRDRFDVLALTGTISP.

S-adenosyl-L-methionine contacts are provided by residues glycine 32, aspartate 55, 87-88 (AE), 102-107 (LMPWGS), and 191-193 (TSW).

It belongs to the methyltransferase superfamily. Kanamycin-apramycin resistance family.

The catalysed reaction is adenosine(1408) in 16S rRNA + S-adenosyl-L-methionine = N(1)-methyladenosine(1408) in 16S rRNA + S-adenosyl-L-homocysteine + H(+). Specifically methylates the N(1) position of adenine 1408 in 16S rRNA. Confers resistance to various aminoglycosides, including kanamycin, neomycin and apramycin. The sequence is that of 16S rRNA (adenine(1408)-N(1))-methyltransferase (kamB) from Streptoalloteichus tenebrarius (strain ATCC 17920 / DSM 40477 / JCM 4838 / CBS 697.72 / NBRC 16177 / NCIMB 11028 / NRRL B-12390 / A12253. 1 / ISP 5477) (Streptomyces tenebrarius).